Here is a 293-residue protein sequence, read N- to C-terminus: Small ribosomal subunit biogenesis GTPase RsgA 2 (293 aa).

Residues 63–223 (SNELVRPPIA…VADTPGFSVL (161 aa)) form the CP-type G domain. GTP is bound by residues 112–115 (TKVD) and 166–174 (GQSGVGKSS). Residues Cys247, Cys252, His254, and Cys260 each coordinate Zn(2+).

This sequence belongs to the TRAFAC class YlqF/YawG GTPase family. RsgA subfamily. In terms of assembly, monomer. Associates with 30S ribosomal subunit, binds 16S rRNA. The cofactor is Zn(2+).

It localises to the cytoplasm. In terms of biological role, one of several proteins that assist in the late maturation steps of the functional core of the 30S ribosomal subunit. Helps release RbfA from mature subunits. May play a role in the assembly of ribosomal proteins into the subunit. Circularly permuted GTPase that catalyzes slow GTP hydrolysis, GTPase activity is stimulated by the 30S ribosomal subunit. This is Small ribosomal subunit biogenesis GTPase RsgA 2 from Oceanobacillus iheyensis (strain DSM 14371 / CIP 107618 / JCM 11309 / KCTC 3954 / HTE831).